Here is a 67-residue protein sequence, read N- to C-terminus: DNA-directed RNA polymerase subunit omega (67 aa).

This sequence belongs to the RNA polymerase subunit omega family. As to quaternary structure, the RNAP catalytic core consists of 2 alpha, 1 beta, 1 beta' and 1 omega subunit. When a sigma factor is associated with the core the holoenzyme is formed, which can initiate transcription.

It catalyses the reaction RNA(n) + a ribonucleoside 5'-triphosphate = RNA(n+1) + diphosphate. Its function is as follows. Promotes RNA polymerase assembly. Latches the N- and C-terminal regions of the beta' subunit thereby facilitating its interaction with the beta and alpha subunits. The sequence is that of DNA-directed RNA polymerase subunit omega from Listeria monocytogenes serotype 4b (strain F2365).